Here is a 248-residue protein sequence, read N- to C-terminus: 3-deoxy-manno-octulosonate cytidylyltransferase 2 (248 aa).

It belongs to the KdsB family.

It is found in the cytoplasm. The enzyme catalyses 3-deoxy-alpha-D-manno-oct-2-ulosonate + CTP = CMP-3-deoxy-beta-D-manno-octulosonate + diphosphate. It participates in nucleotide-sugar biosynthesis; CMP-3-deoxy-D-manno-octulosonate biosynthesis; CMP-3-deoxy-D-manno-octulosonate from 3-deoxy-D-manno-octulosonate and CTP: step 1/1. It functions in the pathway bacterial outer membrane biogenesis; lipopolysaccharide biosynthesis. Functionally, activates KDO (a required 8-carbon sugar) for incorporation into bacterial lipopolysaccharide in Gram-negative bacteria. The polypeptide is 3-deoxy-manno-octulosonate cytidylyltransferase 2 (Hydrogenovibrio crunogenus (strain DSM 25203 / XCL-2) (Thiomicrospira crunogena)).